A 140-amino-acid polypeptide reads, in one-letter code: MNNQPSVLFVCVGNGGKSQMAAALAKKHAGDALKVYSAGTKPGTKLNQQSLDSIAEVGADMSQGFPKGIDQELIKRVDRVVILGAEAQLEMPIDANGILQRWVTDEPSERGIEGMERMRLVRDDIDARVQNLVAELTQNA.

It belongs to the low molecular weight phosphotyrosine protein phosphatase family.

The protein resides in the cytoplasm. The catalysed reaction is mycothiol + arsenate = arseno-mycothiol + H2O. Its function is as follows. Involved in defense against toxic arsenate. Involved in the mycothiol/myoredoxin redox pathway which uses a mycothioltransferase mechanism; facilitates adduct formation between arsenate and mycothiol. In Corynebacterium glutamicum (strain ATCC 13032 / K051), this protein is Arsenate-mycothiol transferase ArsC1 (arsC1).